Reading from the N-terminus, the 163-residue chain is Xanthine-guanine phosphoribosyltransferase (163 aa).

5-phospho-alpha-D-ribose 1-diphosphate is bound by residues arginine 43–glycine 44 and aspartate 95–threonine 103. Residue aspartate 96 participates in Mg(2+) binding. Residues aspartate 99 and isoleucine 142 each coordinate guanine. Xanthine-binding residues include aspartate 99 and isoleucine 142. GMP is bound by residues aspartate 99 to threonine 103 and tryptophan 141 to isoleucine 142.

This sequence belongs to the purine/pyrimidine phosphoribosyltransferase family. XGPT subfamily. As to quaternary structure, homotetramer. Requires Mg(2+) as cofactor.

It localises to the cell inner membrane. The enzyme catalyses GMP + diphosphate = guanine + 5-phospho-alpha-D-ribose 1-diphosphate. It catalyses the reaction XMP + diphosphate = xanthine + 5-phospho-alpha-D-ribose 1-diphosphate. It carries out the reaction IMP + diphosphate = hypoxanthine + 5-phospho-alpha-D-ribose 1-diphosphate. It functions in the pathway purine metabolism; GMP biosynthesis via salvage pathway; GMP from guanine: step 1/1. It participates in purine metabolism; XMP biosynthesis via salvage pathway; XMP from xanthine: step 1/1. In terms of biological role, purine salvage pathway enzyme that catalyzes the transfer of the ribosyl-5-phosphate group from 5-phospho-alpha-D-ribose 1-diphosphate (PRPP) to the N9 position of the 6-oxopurines guanine and xanthine to form the corresponding ribonucleotides GMP (guanosine 5'-monophosphate) and XMP (xanthosine 5'-monophosphate), with the release of PPi. To a lesser extent, also acts on hypoxanthine. The polypeptide is Xanthine-guanine phosphoribosyltransferase (Nitratidesulfovibrio vulgaris (strain ATCC 29579 / DSM 644 / CCUG 34227 / NCIMB 8303 / VKM B-1760 / Hildenborough) (Desulfovibrio vulgaris)).